We begin with the raw amino-acid sequence, 148 residues long: UPF0756 membrane protein YeaL (148 aa).

Transmembrane regions (helical) follow at residues 14 to 34, 51 to 71, 86 to 106, and 121 to 141; these read ALGFISHNTTVAVSILVLIIV, LSIGIIILTIGVMAPIASGTL, LVAIAVGVIVYWLGGRGVTLM, and VLGVALFRGVPVGPLIAAGLV.

The protein belongs to the UPF0756 family.

Its subcellular location is the cell membrane. In Shigella dysenteriae serotype 1 (strain Sd197), this protein is UPF0756 membrane protein YeaL.